The chain runs to 68 residues: MIRMGFFLTLTVAVLLTSLICTEAVPTDKRGMERLFDHVLLKDQRQCPYCVVHCCPPSYCQASGCRPP.

A signal peptide spans 1–24; sequence MIRMGFFLTLTVAVLLTSLICTEA. Residues 25-45 constitute a propeptide that is removed on maturation; the sequence is VPTDKRGMERLFDHVLLKDQR. 3 disulfide bridges follow: cysteine 47–cysteine 55, cysteine 50–cysteine 60, and cysteine 54–cysteine 65.

The protein belongs to the conotoxin U superfamily. As to expression, expressed by the venom duct.

The protein resides in the secreted. In Conus victoriae (Queen Victoria cone), this protein is Conotoxin Vc7.4.